The chain runs to 164 residues: UPF0114 protein Sbal223_3668 (164 aa).

Transmembrane regions (helical) follow at residues 15-35, 53-73, 108-128, and 136-156; these read IMAP…IKFF, LVLV…IVMV, KVAA…FMDV, and IMWY…MGYL.

The protein belongs to the UPF0114 family.

The protein localises to the cell membrane. This is UPF0114 protein Sbal223_3668 from Shewanella baltica (strain OS223).